The chain runs to 194 residues: Casparian strip membrane protein 2 (194 aa).

The Cytoplasmic portion of the chain corresponds to 1 to 32 (MSTTIDIPESSKVVKGKGVVAAPLRPGGWKKG). A helical transmembrane segment spans residues 33-53 (VAIMDFILRLGAIAAALGAAA). Topologically, residues 54–82 (TMGTSDQTLPFFTQFFQFEASYDSFTTFQ) are extracellular. Residues 83 to 103 (FFVITMALVGGYLVLSLPFSV) traverse the membrane as a helical segment. Topologically, residues 104 to 115 (VAIIRPHAVGPR) are cytoplasmic. Residues 116 to 136 (LFLIILDTVFLTLATASAASA) form a helical membrane-spanning segment. Topologically, residues 137 to 168 (AAVVYLAHNGDQDTNWLAICNQFGDFCAQTSS) are extracellular. Residues 169–189 (AVVSSFVAVVVFVLLIVMSAL) form a helical membrane-spanning segment. Residues 190-194 (AMGKP) are Cytoplasmic-facing.

It belongs to the Casparian strip membrane proteins (CASP) family. In terms of assembly, homodimer and heterodimers.

Its subcellular location is the cell membrane. In terms of biological role, regulates membrane-cell wall junctions and localized cell wall deposition. Required for establishment of the Casparian strip membrane domain (CSD) and the subsequent formation of Casparian strips, a cell wall modification of the root endodermis that determines an apoplastic barrier between the intraorganismal apoplasm and the extraorganismal apoplasm and prevents lateral diffusion. This Vigna unguiculata (Cowpea) protein is Casparian strip membrane protein 2.